Consider the following 82-residue polypeptide: Small ribosomal subunit protein uS17 (82 aa).

Belongs to the universal ribosomal protein uS17 family. In terms of assembly, part of the 30S ribosomal subunit.

Functionally, one of the primary rRNA binding proteins, it binds specifically to the 5'-end of 16S ribosomal RNA. This Thermosynechococcus vestitus (strain NIES-2133 / IAM M-273 / BP-1) protein is Small ribosomal subunit protein uS17.